The sequence spans 616 residues: Dihydroxy-acid dehydratase (616 aa).

Residue aspartate 81 coordinates Mg(2+). Cysteine 122 provides a ligand contact to [2Fe-2S] cluster. Mg(2+)-binding residues include aspartate 123 and lysine 124. Lysine 124 carries the N6-carboxylysine modification. Cysteine 195 is a [2Fe-2S] cluster binding site. Residue glutamate 491 participates in Mg(2+) binding. Serine 517 functions as the Proton acceptor in the catalytic mechanism.

The protein belongs to the IlvD/Edd family. In terms of assembly, homodimer. The cofactor is [2Fe-2S] cluster. Mg(2+) is required as a cofactor.

The catalysed reaction is (2R)-2,3-dihydroxy-3-methylbutanoate = 3-methyl-2-oxobutanoate + H2O. It catalyses the reaction (2R,3R)-2,3-dihydroxy-3-methylpentanoate = (S)-3-methyl-2-oxopentanoate + H2O. It participates in amino-acid biosynthesis; L-isoleucine biosynthesis; L-isoleucine from 2-oxobutanoate: step 3/4. Its pathway is amino-acid biosynthesis; L-valine biosynthesis; L-valine from pyruvate: step 3/4. Functionally, functions in the biosynthesis of branched-chain amino acids. Catalyzes the dehydration of (2R,3R)-2,3-dihydroxy-3-methylpentanoate (2,3-dihydroxy-3-methylvalerate) into 2-oxo-3-methylpentanoate (2-oxo-3-methylvalerate) and of (2R)-2,3-dihydroxy-3-methylbutanoate (2,3-dihydroxyisovalerate) into 2-oxo-3-methylbutanoate (2-oxoisovalerate), the penultimate precursor to L-isoleucine and L-valine, respectively. The polypeptide is Dihydroxy-acid dehydratase (Escherichia coli (strain 55989 / EAEC)).